Reading from the N-terminus, the 434-residue chain is Lecithin-cholesterol acyltransferase-like 1 (434 aa).

The Acyl-ester intermediate role is filled by Ser191. Active-site charge relay system residues include Asp354 and His386.

This sequence belongs to the AB hydrolase superfamily. Lipase family.

The protein is Lecithin-cholesterol acyltransferase-like 1 of Oryza sativa subsp. japonica (Rice).